A 526-amino-acid chain; its full sequence is Nuclear pore glycoprotein p62 (526 aa).

N-acetylserine is present on serine 2. 4 repeat units span residues 6-7 (FG), 46-47 (FG), 78-79 (FG), and 115-116 (FG). The 5 X 2 AA repeats of F-G stretch occupies residues 6 to 144 (FGGTGAPAGG…GTAPTGFVFG (139 aa)). The interval 43–82 (GFNFGTPSQPAATTPSTSLFSLTTQTPTTQTPGFNFGTTP) is disordered. Residues 46 to 81 (FGTPSQPAATTPSTSLFSLTTQTPTTQTPGFNFGTT) are compositionally biased toward low complexity. Residues 128 to 137 (SGSTSNQGTA) are compositionally biased toward polar residues. A disordered region spans residues 128–148 (SGSTSNQGTAPTGFVFGSSTT). Repeat unit 5 spans residues 143–144 (FG). A required for centrosome localization region spans residues 332–462 (MTYAQLESLI…QDLKDIIEHL (131 aa)). The stretch at 332 to 462 (MTYAQLESLI…QDLKDIIEHL (131 aa)) forms a coiled coil. Residue threonine 377 is glycosylated (O-linked (GlcNAc) threonine). Phosphoserine occurs at positions 412 and 422. Serine 472 carries O-linked (GlcNAc) serine glycosylation.

Belongs to the nucleoporin NSP1/NUP62 family. As to quaternary structure, component of the p62 complex, a complex at least composed of NUP62, NUP54, and NUP58. Interacts with NUP88. Interacts with NUTF2. Interacts with HIKESHI. Interacts with OSBPL8. Interacts with CAPG. Interacts with SAS6 and TUBG1 at the centrosome. Interacts with MCM3AP. O-glycosylated. Post-translationally, the inner channel of the NPC has a different redox environment from the cytoplasm and allows the formation of interchain disulfide bonds between some nucleoporins, the significant increase of these linkages upon oxidative stress reduces the permeability of the NPC.

It localises to the nucleus. The protein localises to the nuclear pore complex. It is found in the cytoplasm. Its subcellular location is the cytoskeleton. The protein resides in the spindle pole. It localises to the nucleus envelope. The protein localises to the microtubule organizing center. It is found in the centrosome. Essential component of the nuclear pore complex. The N-terminal is probably involved in nucleocytoplasmic transport. The C-terminal is involved in protein-protein interaction probably via coiled-coil formation, promotes its association with centrosomes and may function in anchorage of p62 to the pore complex. Plays a role in mitotic cell cycle progression by regulating centrosome segregation, centriole maturation and spindle orientation. It might be involved in protein recruitment to the centrosome after nuclear breakdown. The protein is Nuclear pore glycoprotein p62 (Nup62) of Mus musculus (Mouse).